The primary structure comprises 511 residues: GMP synthase [glutamine-hydrolyzing] (511 aa).

The 191-residue stretch at 5–195 folds into the Glutamine amidotransferase type-1 domain; the sequence is MILVLDFGGQ…LYNICGCKGD (191 aa). Catalysis depends on Cys-82, which acts as the Nucleophile. Residues His-169 and Glu-171 contribute to the active site. The GMPS ATP-PPase domain maps to 196-386; the sequence is WKMSSFVENS…LGIPEDLVWR (191 aa). 223–229 lines the ATP pocket; sequence SGGVDSS.

Homodimer.

It carries out the reaction XMP + L-glutamine + ATP + H2O = GMP + L-glutamate + AMP + diphosphate + 2 H(+). The protein operates within purine metabolism; GMP biosynthesis; GMP from XMP (L-Gln route): step 1/1. Catalyzes the synthesis of GMP from XMP. The sequence is that of GMP synthase [glutamine-hydrolyzing] from Ruminiclostridium cellulolyticum (strain ATCC 35319 / DSM 5812 / JCM 6584 / H10) (Clostridium cellulolyticum).